A 156-amino-acid chain; its full sequence is Homeobox-leucine zipper protein ATHB-52 (156 aa).

A DNA-binding region (homeobox) is located at residues 8-67 (GKNKKKRLTQDQVRQLEKCFTMNKKLEPDLKLQLSNQLGLPQRQVAVWFQNKRARFKTQS). A leucine-zipper region spans residues 68 to 96 (LEVQHCTLQSKHEAALSDKAKLEHQVQFL).

It belongs to the HD-ZIP homeobox family. Class I subfamily. In terms of tissue distribution, expressed in roots and flowers.

The protein resides in the nucleus. Functionally, probable transcription factor. The polypeptide is Homeobox-leucine zipper protein ATHB-52 (ATHB-52) (Arabidopsis thaliana (Mouse-ear cress)).